The sequence spans 552 residues: Probable acyl-activating enzyme 5, peroxisomal (552 aa).

A Microbody targeting signal motif is present at residues 550-552; the sequence is SRM.

It belongs to the ATP-dependent AMP-binding enzyme family. Expressed in roots, stems and developing seeds.

It is found in the peroxisome. Functionally, may act as an acid--thiol ligase that activates carboxylic acids by forming acyl-CoAs. The protein is Probable acyl-activating enzyme 5, peroxisomal (AAE5) of Arabidopsis thaliana (Mouse-ear cress).